The following is a 281-amino-acid chain: sn-glycerol-3-phosphate transport system permease protein UgpE (281 aa).

Transmembrane regions (helical) follow at residues 14–34 (IMLIIGVLLILFPLYVAFVAA), 85–105 (FAITVGKITVSILSAYAIVYF), 113–133 (FFWLIFLTLMLPVEVRIFPTI), 142–162 (LDSYTGLTLPLMASATATFLF), 201–221 (AALFVITFIYGWNQYLWPILI), and 247–267 (WNQVMAAMILTLIPPVVVVLL). An ABC transmembrane type-1 domain is found at 77 to 268 (LLNSFVMAFA…IPPVVVVLLM (192 aa)).

This sequence belongs to the binding-protein-dependent transport system permease family. UgpAE subfamily. The complex is composed of two ATP-binding proteins (UgpC), two transmembrane proteins (UgpA and UgpE) and a solute-binding protein (UgpB).

Its subcellular location is the cell inner membrane. Part of the ABC transporter complex UgpBAEC involved in sn-glycerol-3-phosphate (G3P) import. Probably responsible for the translocation of the substrate across the membrane. This Yersinia pestis bv. Antiqua (strain Antiqua) protein is sn-glycerol-3-phosphate transport system permease protein UgpE (ugpE).